A 219-amino-acid chain; its full sequence is MPILAKRVLFIDAEAMIIDKPAGLPVTSVRDGSLSLENYLASLCFGFKRWPSIVHRLDRDTSGCLLLARNPKMHRRLSEAFSQGQVKKCYWAILEGVPEKNEGIIDLPLLKISSPKSGWRIVADDKGKRAVTHWEILAKNKGRSLVAFRPETGRTHQLRVHAATGLGLPIVGDPFYGSHKDENISRMMLHAHSLEIARLEKKPITAEAPLPKAFTDLGF.

The active site involves aspartate 58.

Belongs to the pseudouridine synthase RluA family.

It carries out the reaction a uridine in RNA = a pseudouridine in RNA. This is an uncharacterized protein from Zymomonas mobilis subsp. mobilis (strain ATCC 31821 / ZM4 / CP4).